The sequence spans 424 residues: STAM-binding protein (424 aa).

The interaction with CHMP3 stretch occupies residues 1-127 (MSDHADVSLP…YEQYKERKKK (127 aa)). Phosphoserine occurs at positions 2 and 48. The segment at 227–231 (PAKPP) is interaction with STAM. Ser-243 carries the post-translational modification Phosphoserine. The 132-residue stretch at 257 to 388 (IVVPRNLCSE…LTDYGLQEIS (132 aa)) folds into the MPN domain. The Zn(2+) site is built by His-335, His-337, Asp-348, His-350, Cys-390, His-396, and His-398. The short motif at 335 to 348 (HTHPTQTAFLSSVD) is the JAMM motif element.

It belongs to the peptidase M67C family. As to quaternary structure, interacts with STAM. Interacts with SMAD6 and SMAD7. Interacts with CHMP3; the interaction appears to relieve the autoinhibition of CHMP3. Interacts with SMURF2 and RNF11; this interaction promotes ubiquitination. Zn(2+) is required as a cofactor. In terms of processing, phosphorylated after BMP type I receptor activation. Ubiquitinated by SMURF2 in the presence of RNF11.

It localises to the nucleus. It is found in the membrane. The protein localises to the cytoplasm. Its subcellular location is the early endosome. Inhibited by N-ethylmaleimide. Zinc metalloprotease that specifically cleaves 'Lys-63'-linked polyubiquitin chains. Does not cleave 'Lys-48'-linked polyubiquitin chains. Plays a role in signal transduction for cell growth and MYC induction mediated by IL-2 and GM-CSF. Potentiates BMP (bone morphogenetic protein) signaling by antagonizing the inhibitory action of SMAD6 and SMAD7. Has a key role in regulation of cell surface receptor-mediated endocytosis and ubiquitin-dependent sorting of receptors to lysosomes. Endosomal localization of STAMBP is required for efficient EGFR degradation but not for its internalization. Involved in the negative regulation of PI3K-AKT-mTOR and RAS-MAP signaling pathways. The sequence is that of STAM-binding protein (Stambp) from Rattus norvegicus (Rat).